The following is a 73-amino-acid chain: Small ribosomal subunit protein bS18 (73 aa).

The protein belongs to the bacterial ribosomal protein bS18 family. Part of the 30S ribosomal subunit. Forms a tight heterodimer with protein bS6.

Its function is as follows. Binds as a heterodimer with protein bS6 to the central domain of the 16S rRNA, where it helps stabilize the platform of the 30S subunit. This Neorickettsia sennetsu (strain ATCC VR-367 / Miyayama) (Ehrlichia sennetsu) protein is Small ribosomal subunit protein bS18.